The chain runs to 134 residues: Aspartate 1-decarboxylase (134 aa).

The Schiff-base intermediate with substrate; via pyruvic acid role is filled by Ser25. Ser25 is modified (pyruvic acid (Ser)). Substrate is bound at residue Thr57. The active-site Proton donor is the Tyr58. 73-75 contributes to the substrate binding site; it reads GAA.

The protein belongs to the PanD family. As to quaternary structure, heterooctamer of four alpha and four beta subunits. It depends on pyruvate as a cofactor. In terms of processing, is synthesized initially as an inactive proenzyme, which is activated by self-cleavage at a specific serine bond to produce a beta-subunit with a hydroxyl group at its C-terminus and an alpha-subunit with a pyruvoyl group at its N-terminus.

The protein resides in the cytoplasm. It catalyses the reaction L-aspartate + H(+) = beta-alanine + CO2. The protein operates within cofactor biosynthesis; (R)-pantothenate biosynthesis; beta-alanine from L-aspartate: step 1/1. In terms of biological role, catalyzes the pyruvoyl-dependent decarboxylation of aspartate to produce beta-alanine. This is Aspartate 1-decarboxylase from Citrifermentans bemidjiense (strain ATCC BAA-1014 / DSM 16622 / JCM 12645 / Bem) (Geobacter bemidjiensis).